The primary structure comprises 155 residues: 2-C-methyl-D-erythritol 2,4-cyclodiphosphate synthase (155 aa).

Residues D8 and H10 each contribute to the a divalent metal cation site. 4-CDP-2-C-methyl-D-erythritol 2-phosphate is bound by residues 8–10 (DVH) and 34–35 (HS). H42 is a binding site for a divalent metal cation. 4-CDP-2-C-methyl-D-erythritol 2-phosphate is bound by residues 56–58 (DIG), 61–65 (FPDSD), 132–135 (TTEE), F139, and R142.

This sequence belongs to the IspF family. In terms of assembly, homotrimer. A divalent metal cation serves as cofactor.

It carries out the reaction 4-CDP-2-C-methyl-D-erythritol 2-phosphate = 2-C-methyl-D-erythritol 2,4-cyclic diphosphate + CMP. It functions in the pathway isoprenoid biosynthesis; isopentenyl diphosphate biosynthesis via DXP pathway; isopentenyl diphosphate from 1-deoxy-D-xylulose 5-phosphate: step 4/6. Its function is as follows. Involved in the biosynthesis of isopentenyl diphosphate (IPP) and dimethylallyl diphosphate (DMAPP), two major building blocks of isoprenoid compounds. Catalyzes the conversion of 4-diphosphocytidyl-2-C-methyl-D-erythritol 2-phosphate (CDP-ME2P) to 2-C-methyl-D-erythritol 2,4-cyclodiphosphate (ME-CPP) with a corresponding release of cytidine 5-monophosphate (CMP). The sequence is that of 2-C-methyl-D-erythritol 2,4-cyclodiphosphate synthase from Clostridium acetobutylicum (strain ATCC 824 / DSM 792 / JCM 1419 / IAM 19013 / LMG 5710 / NBRC 13948 / NRRL B-527 / VKM B-1787 / 2291 / W).